A 572-amino-acid chain; its full sequence is Proline--tRNA ligase (572 aa).

The protein belongs to the class-II aminoacyl-tRNA synthetase family. ProS type 1 subfamily. As to quaternary structure, homodimer.

The protein resides in the cytoplasm. It catalyses the reaction tRNA(Pro) + L-proline + ATP = L-prolyl-tRNA(Pro) + AMP + diphosphate. In terms of biological role, catalyzes the attachment of proline to tRNA(Pro) in a two-step reaction: proline is first activated by ATP to form Pro-AMP and then transferred to the acceptor end of tRNA(Pro). As ProRS can inadvertently accommodate and process non-cognate amino acids such as alanine and cysteine, to avoid such errors it has two additional distinct editing activities against alanine. One activity is designated as 'pretransfer' editing and involves the tRNA(Pro)-independent hydrolysis of activated Ala-AMP. The other activity is designated 'posttransfer' editing and involves deacylation of mischarged Ala-tRNA(Pro). The misacylated Cys-tRNA(Pro) is not edited by ProRS. This chain is Proline--tRNA ligase, found in Haemophilus influenzae (strain 86-028NP).